An 850-amino-acid polypeptide reads, in one-letter code: Trimethylamine-N-oxide reductase (850 aa).

The tat-type signal signal peptide spans 1-39 (MKNKDSLHVSRRRFLAQLGGLTVAGMLGPSLLTPRSARA). Mo-bis(molybdopterin guanine dinucleotide) is bound at residue Ser-191.

It belongs to the prokaryotic molybdopterin-containing oxidoreductase family. It depends on Mo-bis(molybdopterin guanine dinucleotide) as a cofactor. Post-translationally, predicted to be exported by the Tat system. The position of the signal peptide cleavage has not been experimentally proven.

It is found in the periplasm. It catalyses the reaction trimethylamine + 2 Fe(III)-[cytochrome c] + H2O = trimethylamine N-oxide + 2 Fe(II)-[cytochrome c] + 3 H(+). In terms of biological role, reduces trimethylamine-N-oxide (TMAO) into trimethylamine; an anaerobic reaction coupled to energy-yielding reactions. The sequence is that of Trimethylamine-N-oxide reductase (torA) from Salmonella typhimurium (strain LT2 / SGSC1412 / ATCC 700720).